We begin with the raw amino-acid sequence, 391 residues long: Pyruvate dehydrogenase E1 component subunit alpha, testis-specific form, mitochondrial (391 aa).

The N-terminal 30 residues, 1-30 (MRKMLATVLSQVFSGMVQKPALRGLLSSLK), are a transit peptide targeting the mitochondrion. Pyruvate is bound by residues H93, Y119, R120, A158, G166, V168, D197, G198, A199, N226, and Y228. Thiamine diphosphate-binding residues include Y119 and R120. 6 residues coordinate thiamine diphosphate: G166, V168, D197, G198, A199, and N226. D197 provides a ligand contact to Mg(2+). Mg(2+) is bound by residues N226 and Y228. H293 is a binding site for thiamine diphosphate. A phosphoserine mark is found at S294 and S296. Position 301 is a phosphoserine; by PDK3 (S301).

Heterotetramer of two PDHA2 and two PDHB subunits. The heterotetramer interacts with DLAT, and is part of the multimeric pyruvate dehydrogenase complex that contains multiple copies of pyruvate dehydrogenase (E1), dihydrolipoamide acetyltransferase (DLAT, E2) and lipoamide dehydrogenase (DLD, E3). These subunits are bound to an inner core composed of about 48 DLAT and 12 PDHX molecules. The cofactor is thiamine diphosphate. Mg(2+) is required as a cofactor. Testis.

The protein localises to the mitochondrion matrix. It carries out the reaction N(6)-[(R)-lipoyl]-L-lysyl-[protein] + pyruvate + H(+) = N(6)-[(R)-S(8)-acetyldihydrolipoyl]-L-lysyl-[protein] + CO2. Its activity is regulated as follows. Pyruvate dehydrogenase activity is inhibited by phosphorylation of PDHA2; it is reactivated by dephosphorylation. Its function is as follows. The pyruvate dehydrogenase complex catalyzes the overall conversion of pyruvate to acetyl-CoA and CO(2), and thereby links the glycolytic pathway to the tricarboxylic cycle. This is Pyruvate dehydrogenase E1 component subunit alpha, testis-specific form, mitochondrial (Pdha2) from Rattus norvegicus (Rat).